Reading from the N-terminus, the 504-residue chain is Maturase K (504 aa).

The protein belongs to the intron maturase 2 family. MatK subfamily.

It localises to the plastid. The protein resides in the chloroplast. In terms of biological role, usually encoded in the trnK tRNA gene intron. Probably assists in splicing its own and other chloroplast group II introns. The protein is Maturase K of Bombax buonopozense (Red-flowered silk cotton tree).